The chain runs to 428 residues: C4-dicarboxylate transport protein (428 aa).

Transmembrane regions (helical) follow at residues 8 to 28, 44 to 64, 76 to 96, 142 to 162, 184 to 204, 222 to 242, 326 to 346, and 352 to 372; these read SLYF…HFYP, LIKM…IAGM, VALL…LIIV, IGAF…LFGF, VIFG…FGAM, LIIC…GSIA, IVHQ…AAGV, and IVLA…LALI.

This sequence belongs to the dicarboxylate/amino acid:cation symporter (DAACS) (TC 2.A.23) family.

The protein localises to the cell inner membrane. Its function is as follows. Responsible for the transport of dicarboxylates such as succinate, fumarate, and malate from the periplasm across the membrane. The protein is C4-dicarboxylate transport protein of Shigella dysenteriae serotype 1 (strain Sd197).